A 440-amino-acid polypeptide reads, in one-letter code: MKRSLHLTFVCLSLFSARMCVQGNQFNIEVSRSNKLSLPGFENLTAGYNKFLRPNFGGEPVQIALTLDVASISSISESNMDYTATIYLRQRWTDQRLVFEGNKSFTLDARLVEFLWVPDTYIVESKKSFLHEVTVGNRLIRLFSNGTVLYALRITTTVACNMDLSKYPMDTQTCKLQLESWGYDGNDVEFSWLRGNDSVRGLENLRLAQYTIQQYFTSVTRSQQETGNYTRLVLQFELQRNVLYFILETYVPSTFLVVLSWVSFWISLDSVPARTCIGVTTVLSMTTLMIGSRTSLPNTNCFIKAIDVYLGICFSFVFGALLEYAVAHYSSLQQMAAKDRGKAKEVEEVNITNIINSSISSFKRKISFASIEISGDNVDYSDLTMKTSDKVKFVFRDKLGRIVDYFTIQNPSNVDRYSKLLFPLIFMLANVFYWAYYMYF.

Positions 1–23 (MKRSLHLTFVCLSLFSARMCVQG) are cleaved as a signal peptide. The Extracellular portion of the chain corresponds to 24-241 (NQFNIEVSRS…LVLQFELQRN (218 aa)). 3 N-linked (GlcNAc...) asparagine glycosylation sites follow: N43, N102, and N145. A disulfide bridge links C160 with C174. N-linked (GlcNAc...) asparagine glycosylation is found at N196 and N228. The helical transmembrane segment at 242–262 (VLYFILETYVPSTFLVVLSWV) threads the bilayer. Residues 263–270 (SFWISLDS) are Cytoplasmic-facing. Residues 271–290 (VPARTCIGVTTVLSMTTLMI) form a helical membrane-spanning segment. Residues 291–301 (GSRTSLPNTNC) lie on the Extracellular side of the membrane. The helical transmembrane segment at 302–322 (FIKAIDVYLGICFSFVFGALL) threads the bilayer. Topologically, residues 323–419 (EYAVAHYSSL…NPSNVDRYSK (97 aa)) are cytoplasmic. The helical transmembrane segment at 420–440 (LLFPLIFMLANVFYWAYYMYF) threads the bilayer.

This sequence belongs to the ligand-gated ion channel (TC 1.A.9) family. Gamma-aminobutyric acid receptor (TC 1.A.9.5) subfamily. GABRP sub-subfamily. As to quaternary structure, heteropentamer, formed by a combination of alpha (GABRA1-6), beta (GABRB1-3), gamma (GABRG1-3), delta (GABRD), epsilon (GABRE), rho (GABRR1-3), pi (GABRP) and theta (GABRQ) chains, each subunit exhibiting distinct physiological and pharmacological properties.

Its subcellular location is the cell membrane. The protein resides in the apical cell membrane. The enzyme catalyses chloride(in) = chloride(out). Its function is as follows. Pi subunit of the heteropentameric ligand-gated chloride channel gated by gamma-aminobutyric acid (GABA). GABA-gated chloride channels, also named GABA(A) receptors (GABAAR), consist of five subunits arranged around a central pore and contain GABA active binding site(s) located at the alpha and beta subunit interfaces. When activated by GABA, GABAARs selectively allow the flow of chloride anions across the cell membrane down their electrochemical gradient. Pi-containing GABAARs are mostly located in peripheral tissues. In the uterus, pi subunits modulate uterus contraction by altering the sensitivity of GABAARs to pregnanolone. In the lungs, pi-containing GABAARs contribute to pulmonary fluid transport via luminal secretion of chloride. The polypeptide is Gamma-aminobutyric acid receptor subunit pi (GABRP) (Bos taurus (Bovine)).